A 320-amino-acid polypeptide reads, in one-letter code: Mitochondrial ribosome-associated GTPase 1 (320 aa).

The CP-type G domain maps to 37 to 209 (LKQMRASPRK…LLDTPGVLPP (173 aa)). Residues 81–84 (NKMD), 153–158 (NVGKSS), and Gly-205 contribute to the GTP site.

The protein belongs to the TRAFAC class YlqF/YawG GTPase family. MTG1 subfamily.

Its subcellular location is the mitochondrion inner membrane. In terms of biological role, plays a role in the regulation of the mitochondrial ribosome assembly and of translational activity. Displays mitochondrial GTPase activity. The sequence is that of Mitochondrial ribosome-associated GTPase 1 from Ictalurus punctatus (Channel catfish).